The primary structure comprises 303 residues: Crk-like protein (303 aa).

Residues tryptophan 14–alanine 102 form the SH2 domain. An SH3 1 domain is found at aspartate 123–arginine 183. 2 positions are modified to phosphotyrosine: tyrosine 127 and tyrosine 207. The interval serine 184 to glutamine 234 is disordered. The SH3 2 domain maps to asparagine 235 to proline 296.

Belongs to the CRK family. In terms of assembly, interacts with tyrosine-phosphorylated EPOR and INPP5D/SHIP1. Interacts with DOCK2 and DOCK5 via its first SH3 domain. Interacts with phosphorylated CBLB and IRS4. Interacts with BCAR1/CAS and NEDD9/HEF1.

Functionally, may mediate the transduction of intracellular signals. The chain is Crk-like protein (CRKL) from Homo sapiens (Human).